Reading from the N-terminus, the 343-residue chain is Lipopolysaccharide core biosynthesis glycosyltransferase LpsD (343 aa).

It belongs to the glycosyltransferase group 1 family. Glycosyltransferase 4 subfamily.

The protein operates within bacterial outer membrane biogenesis; LPS core biosynthesis. The protein is Lipopolysaccharide core biosynthesis glycosyltransferase LpsD (lpsD) of Rhizobium meliloti (strain 1021) (Ensifer meliloti).